Here is a 321-residue protein sequence, read N- to C-terminus: Porphobilinogen deaminase (321 aa).

C243 carries the S-(dipyrrolylmethanemethyl)cysteine modification.

The protein belongs to the HMBS family. Monomer. Requires dipyrromethane as cofactor.

It carries out the reaction 4 porphobilinogen + H2O = hydroxymethylbilane + 4 NH4(+). Its pathway is porphyrin-containing compound metabolism; protoporphyrin-IX biosynthesis; coproporphyrinogen-III from 5-aminolevulinate: step 2/4. Functionally, tetrapolymerization of the monopyrrole PBG into the hydroxymethylbilane pre-uroporphyrinogen in several discrete steps. The sequence is that of Porphobilinogen deaminase from Histophilus somni (strain 129Pt) (Haemophilus somnus).